Reading from the N-terminus, the 351-residue chain is Dihydroorotate dehydrogenase (quinone) (351 aa).

FMN is bound by residues 61 to 65 (AGLDK) and T85. Position 65 (K65) interacts with substrate. Residue 110–114 (NRMGF) coordinates substrate. FMN-binding residues include N139 and N172. N172 contacts substrate. S175 serves as the catalytic Nucleophile. N177 serves as a coordination point for substrate. 2 residues coordinate FMN: K217 and T245. Position 246–247 (246–247 (NT)) interacts with substrate. Residues G268, G297, and 318–319 (YS) each bind FMN.

The protein belongs to the dihydroorotate dehydrogenase family. Type 2 subfamily. Monomer. FMN is required as a cofactor.

The protein resides in the cell membrane. The enzyme catalyses (S)-dihydroorotate + a quinone = orotate + a quinol. It participates in pyrimidine metabolism; UMP biosynthesis via de novo pathway; orotate from (S)-dihydroorotate (quinone route): step 1/1. Catalyzes the conversion of dihydroorotate to orotate with quinone as electron acceptor. This is Dihydroorotate dehydrogenase (quinone) from Xanthomonas axonopodis pv. citri (strain 306).